We begin with the raw amino-acid sequence, 424 residues long: Histidine--tRNA ligase (424 aa).

Belongs to the class-II aminoacyl-tRNA synthetase family. In terms of assembly, homodimer.

It is found in the cytoplasm. The enzyme catalyses tRNA(His) + L-histidine + ATP = L-histidyl-tRNA(His) + AMP + diphosphate + H(+). The chain is Histidine--tRNA ligase from Salmonella typhi.